We begin with the raw amino-acid sequence, 252 residues long: 5-oxoprolinase subunit A (252 aa).

This sequence belongs to the LamB/PxpA family. In terms of assembly, forms a complex composed of PxpA, PxpB and PxpC.

It carries out the reaction 5-oxo-L-proline + ATP + 2 H2O = L-glutamate + ADP + phosphate + H(+). Functionally, catalyzes the cleavage of 5-oxoproline to form L-glutamate coupled to the hydrolysis of ATP to ADP and inorganic phosphate. The sequence is that of 5-oxoprolinase subunit A from Photorhabdus laumondii subsp. laumondii (strain DSM 15139 / CIP 105565 / TT01) (Photorhabdus luminescens subsp. laumondii).